A 20-amino-acid chain; its full sequence is Cruzioseptin-15 (20 aa).

In terms of tissue distribution, expressed by the skin glands.

The protein resides in the secreted. Functionally, has antimicrobial activity. In Cruziohyla calcarifer (Splendid leaf frog), this protein is Cruzioseptin-15.